The primary structure comprises 497 residues: Catalase-2 (497 aa).

Catalysis depends on residues histidine 71 and asparagine 144. Tyrosine 354 serves as a coordination point for heme.

It belongs to the catalase family. The cofactor is heme.

It catalyses the reaction 2 H2O2 = O2 + 2 H2O. Its function is as follows. Catalase involved in the oxidative stress response serving to protect cells from toxicity. For instance plays a role in defending against oxidative damage induced by excessive copper stress. Not required for maintaining normal lifespan. The chain is Catalase-2 from Caenorhabditis elegans.